Here is a 1405-residue protein sequence, read N- to C-terminus: DNA-directed RNA polymerase subunit beta' (1405 aa).

Zn(2+) contacts are provided by Cys70, Cys72, Cys85, and Cys88. Mg(2+)-binding residues include Asp458, Asp460, and Asp462. Zn(2+) is bound by residues Cys813, Cys887, Cys894, and Cys897.

The protein belongs to the RNA polymerase beta' chain family. The RNAP catalytic core consists of 2 alpha, 1 beta, 1 beta' and 1 omega subunit. When a sigma factor is associated with the core the holoenzyme is formed, which can initiate transcription. Requires Mg(2+) as cofactor. It depends on Zn(2+) as a cofactor.

It catalyses the reaction RNA(n) + a ribonucleoside 5'-triphosphate = RNA(n+1) + diphosphate. In terms of biological role, DNA-dependent RNA polymerase catalyzes the transcription of DNA into RNA using the four ribonucleoside triphosphates as substrates. In Albidiferax ferrireducens (strain ATCC BAA-621 / DSM 15236 / T118) (Rhodoferax ferrireducens), this protein is DNA-directed RNA polymerase subunit beta'.